Consider the following 152-residue polypeptide: Ribonuclease H (152 aa).

In terms of domain architecture, RNase H type-1 spans 6 to 147 (KKNRVIAYTD…ADELANKAIA (142 aa)). Mg(2+) is bound by residues D15, E53, D75, and D139.

It belongs to the RNase H family. As to quaternary structure, monomer. Requires Mg(2+) as cofactor.

Its subcellular location is the cytoplasm. The catalysed reaction is Endonucleolytic cleavage to 5'-phosphomonoester.. In terms of biological role, endonuclease that specifically degrades the RNA of RNA-DNA hybrids. The chain is Ribonuclease H from Francisella tularensis subsp. tularensis (strain FSC 198).